A 424-amino-acid polypeptide reads, in one-letter code: Adenylosuccinate synthetase 2 (424 aa).

GTP is bound by residues 11–17 and 39–41; these read GDEGKGK and GHT. The active-site Proton acceptor is the Asp-12. Residues Asp-12 and Gly-39 each contribute to the Mg(2+) site. IMP-binding positions include 12 to 15, 37 to 40, Thr-127, Arg-141, Gln-223, Thr-238, and Arg-302; these read DEGK and NAGH. The Proton donor role is filled by His-40. Position 298–304 (298–304) interacts with substrate; the sequence is TTTGRGR. GTP-binding positions include Arg-304, 330 to 332, and 412 to 414; these read KLD and SVG.

Belongs to the adenylosuccinate synthetase family. As to quaternary structure, homodimer. The cofactor is Mg(2+).

The protein resides in the cytoplasm. The catalysed reaction is IMP + L-aspartate + GTP = N(6)-(1,2-dicarboxyethyl)-AMP + GDP + phosphate + 2 H(+). It participates in purine metabolism; AMP biosynthesis via de novo pathway; AMP from IMP: step 1/2. In terms of biological role, plays an important role in the de novo pathway of purine nucleotide biosynthesis. Catalyzes the first committed step in the biosynthesis of AMP from IMP. This is Adenylosuccinate synthetase 2 from Methanosarcina acetivorans (strain ATCC 35395 / DSM 2834 / JCM 12185 / C2A).